The primary structure comprises 61 residues: uncharacterized protein (61 aa).

This is an uncharacterized protein from Rickettsia conorii (strain ATCC VR-613 / Malish 7).